Reading from the N-terminus, the 343-residue chain is Mas-related G-protein coupled receptor member F (343 aa).

Residues Met-1 to Pro-44 lie on the Extracellular side of the membrane. N-linked (GlcNAc...) asparagine glycosylation occurs at Asn-4. A helical transmembrane segment spans residues Ala-45–Leu-66. Over Trp-67–Phe-82 the chain is Cytoplasmic. Residues Leu-83 to Met-104 form a helical membrane-spanning segment. Residues Gly-105 to Gly-123 are Extracellular-facing. A helical transmembrane segment spans residues Leu-124–Ser-144. The Cytoplasmic segment spans residues Val-145–Ser-160. A helical transmembrane segment spans residues Ala-161–Phe-181. Topologically, residues Cys-182 to Asp-198 are extracellular. A helical membrane pass occupies residues Ile-199–Leu-220. At Ile-221–Val-241 the chain is on the cytoplasmic side. A helical membrane pass occupies residues Leu-242–Trp-263. The Extracellular portion of the chain corresponds to Val-264–Glu-273. A helical membrane pass occupies residues Tyr-274–Ala-294. Topologically, residues Gly-295–Ser-343 are cytoplasmic. A disordered region spans residues Ala-318–Ser-343. A compositionally biased stretch (polar residues) spans Ala-324–Ser-343.

The protein belongs to the G-protein coupled receptor 1 family. Mas subfamily. Gut, vas deferens, uterus and aorta; barely detectable in liver, kidney, lung, and salivary gland. In the brain, markedly abundant in the cerebellum.

It is found in the cell membrane. Functionally, orphan receptor. May bind to a neuropeptide and may regulate nociceptor function and/or development, including the sensation or modulation of pain. The protein is Mas-related G-protein coupled receptor member F (Mrgprf) of Rattus norvegicus (Rat).